A 250-amino-acid polypeptide reads, in one-letter code: tRNA (guanine-N(1)-)-methyltransferase (250 aa).

Residues Gly113 and 133 to 138 each bind S-adenosyl-L-methionine; that span reads VGDYVL.

Belongs to the RNA methyltransferase TrmD family. In terms of assembly, homodimer.

It is found in the cytoplasm. The enzyme catalyses guanosine(37) in tRNA + S-adenosyl-L-methionine = N(1)-methylguanosine(37) in tRNA + S-adenosyl-L-homocysteine + H(+). Its function is as follows. Specifically methylates guanosine-37 in various tRNAs. The protein is tRNA (guanine-N(1)-)-methyltransferase of Proteus mirabilis (strain HI4320).